The primary structure comprises 1135 residues: Phytochrome C (1135 aa).

A compositionally biased stretch (polar residues) spans 1–11 (MSSPLNNRGTC). The tract at residues 1-26 (MSSPLNNRGTCSRSSSARSRHSARVV) is disordered. The GAF domain maps to 216-399 (NLSLLCDVLV…VFGIQLNKEV (184 aa)). Cys321 is a binding site for phytochromobilin. 2 PAS domains span residues 618-688 (VTNE…LQGI) and 748-822 (IQGD…TKLS). Positions 902–1122 (YIHQELRNPL…IILIEFPVAQ (221 aa)) constitute a Histidine kinase domain.

This sequence belongs to the phytochrome family. Homodimer. Contains one covalently linked phytochromobilin chromophore.

Regulatory photoreceptor which exists in two forms that are reversibly interconvertible by light: the Pr form that absorbs maximally in the red region of the spectrum and the Pfr form that absorbs maximally in the far-red region. Photoconversion of Pr to Pfr induces an array of morphogenic responses, whereas reconversion of Pfr to Pr cancels the induction of those responses. Pfr controls the expression of a number of nuclear genes including those encoding the small subunit of ribulose-bisphosphate carboxylase, chlorophyll A/B binding protein, protochlorophyllide reductase, rRNA, etc. It also controls the expression of its own gene(s) in a negative feedback fashion. The chain is Phytochrome C (PHYC) from Sorghum bicolor (Sorghum).